The primary structure comprises 317 residues: uncharacterized protein (317 aa).

The region spanning 1-60 is the HTH lysR-type domain; sequence MKHELSSMKAFVILAESSSFNNAAKLLNITQPALTRRIKKMEEDLHVQLFERTTRKVTLT. The H-T-H motif DNA-binding region spans 20 to 40; that stretch reads FNNAAKLLNITQPALTRRIKK.

The protein belongs to the LysR transcriptional regulatory family.

This is an uncharacterized protein from Escherichia coli (strain K12).